The sequence spans 775 residues: MSSSSPTGQIASAADIKQENGMESASEGQEAHREVAGGAAAGLSPPAPAPFPLEPGDAAAASRVSREEGAAAAGAADQVQLHSELLGRHQHAAAAQPPLAFSPDHVACVCEALQQGGNLDRLARFLWSLPQSDLLRGNESLLKARALVAFHQGIYPELYSILESHSFESANHPLLQQLWYKARYTEAERARGRPLGAVDKYRLRRKFPLPRTIWDGEETVYCFKEKSRNALKELYKQNRYPSPAEKRHLAKITGLSLTQVSNWFKNRRQRDRNPSETQSKSESDGNPSTEDESSKGHEDLSPHPLSGASDGVTNLSLSSHVEPVYMQQIGNAKISLSSSGVLLNGSLVPASTSPVFLNGNSFIQGHNGVILNGLNVGNTQTVSLNPPKMSSNIVGNGIAMTDILGSTSQDVKEFKVLQSSAVNSAATTSYSPSAPVSFPGLIPCTEVKREGIQTVASQDGGSVVTFTTPVQINQYGIVQIPNSGANGQFLNGSIGFSPLQLPPVSVAASQGNLSVTPSTSDGSTFTSEPATVQHGKLFLSPLTPSAVVYTVPNSGQTVGAVKQEGLERGLVFSQLMPVNHSAQVNASLSSENLSGSGLHPLTSSLVNVSAAHGFSLTPPTLLNPTELNPDLAESQPVSAPVASKCTVSSVSNTNYATLQNCSLIPGQDLLSGPMTQAALGEIVPTAEEQVSHASTAVHQDFVREQRLVLQSVPNIKENFLQNSENKATNNLMMLDSKSKYVLDGMVEAGCEDLGTDKKELAKLQTVQLDEDMQDL.

A compositionally biased stretch (polar residues) spans 1 to 10; it reads MSSSSPTGQI. 2 disordered regions span residues 1–76 and 263–313; these read MSSS…AGAA and WFKN…DGVT. An N-acetylserine modification is found at serine 2. Residues 54 to 63 show a composition bias toward low complexity; sequence EPGDAAAASR. A DNA-binding region (homeobox) is located at residues 216–275; sequence GEETVYCFKEKSRNALKELYKQNRYPSPAEKRHLAKITGLSLTQVSNWFKNRRQRDRNPS. 2 stretches are compositionally biased toward basic and acidic residues: residues 271 to 283 and 292 to 301; these read DRNP…KSES and ESSKGHEDLS. The transactivation domain stretch occupies residues 582-775; that stretch reads AQVNASLSSE…VQLDEDMQDL (194 aa). The residue at position 634 (serine 634) is a Phosphoserine.

The protein belongs to the SIX/Sine oculis homeobox family. In terms of assembly, interacts with EYA3; acts cooperatively with EYA3 to transactivate target genes through interaction and nuclear translocation of EYA3 protein. In terms of tissue distribution, mainly expressed in the skeletal muscle (isoform 1 and isoform 2 but not isoform 3), and weakly in the heart. Also found in the retina and the distal tube of kidney. Expressed in skeletal muscle, nasal epithelium, cochlea, parathyroid and salivary gland. Expressed in muscle satellite cells of normal and regenerating muscles.

Its subcellular location is the nucleus. The protein localises to the cytoplasm. Its function is as follows. Transcriptional regulator which can act as both a transcriptional repressor and activator by binding a DNA sequence on these target genes and is involved in processes like cell differentiation, cell migration and cell survival. Transactivates gene expression by binding a 5'-[CAT]A[CT][CT][CTG]GA[GAT]-3' motif present in the Trex site and from a 5'-TCA[AG][AG]TTNC-3' motif present in the MEF3 site of the muscle-specific genes enhancer. Acts cooperatively with EYA proteins to transactivate their target genes through interaction and nuclear translocation of EYA protein. Acts synergistically with SIX1 to regulate target genes involved in formation of various organs, including muscle, kidney, gonad, ganglia, olfactory epithelium and cranial skeleton. Plays a role in several important steps of muscle development. Controls the genesis of hypaxial myogenic progenitors in the dermomyotome by transactivating PAX3 and the delamination and migration of the hypaxial precursors from the ventral lip to the limb buds through the transactivation of PAX3, MET and LBX1. Controls myoblast determination by transactivating MYF5, MYOD1 and MYF6. Controls somitic differentiation in myocyte through MYOG transactivation. Plays a role in synaptogenesis and sarcomere organization by participating in myofiber specialization during embryogenesis by activating fast muscle program in the primary myotome resulting in an up-regulation of fast muscle genes, including ATP2A1, MYL1 and TNNT3. Simultaneously, is also able to activate inhibitors of slow muscle genes, such as SOX6, HRASLS, and HDAC4, thereby restricting the activation of the slow muscle genes. During muscle regeneration, negatively regulates differentiation of muscle satellite cells through down-regulation of MYOG expression. During kidney development regulates the early stages of metanephros development and ureteric bud formation through regulation of GDNF, SALL1, PAX8 and PAX2 expression. Plays a role in gonad development by regulating both testis determination and size determination. In gonadal sex determination, transactivates ZFPM2 by binding a MEF3 consensus sequence, resulting in SRY up-regulation. In gonadal size determination, transactivates NR5A1 by binding a MEF3 consensus sequence resulting in gonadal precursor cell formation regulation. During olfactory development mediates the specification and patterning of olfactory placode through fibroblast growth factor and BMP4 signaling pathways and also regulates epithelial cell proliferation during placode formation. Promotes survival of sensory neurons during early trigeminal gangliogenesis. In the developing dorsal root ganglia, up-regulates SLC12A2 transcription. Regulates early thymus/parathyroid organogenesis through regulation of GCM2 and FOXN1 expression. Forms gustatory papillae during development of the tongue. Also plays a role during embryonic cranial skeleton morphogenesis. The sequence is that of Homeobox protein SIX4 (Six4) from Mus musculus (Mouse).